The sequence spans 134 residues: Ribosome-binding factor A (134 aa).

It belongs to the RbfA family. Monomer. Binds 30S ribosomal subunits, but not 50S ribosomal subunits or 70S ribosomes.

Its subcellular location is the cytoplasm. Functionally, one of several proteins that assist in the late maturation steps of the functional core of the 30S ribosomal subunit. Associates with free 30S ribosomal subunits (but not with 30S subunits that are part of 70S ribosomes or polysomes). Required for efficient processing of 16S rRNA. May interact with the 5'-terminal helix region of 16S rRNA. This Rhizobium johnstonii (strain DSM 114642 / LMG 32736 / 3841) (Rhizobium leguminosarum bv. viciae) protein is Ribosome-binding factor A.